Here is a 1733-residue protein sequence, read N- to C-terminus: Gag-Pol polyprotein (1733 aa).

The N-myristoyl glycine; by host moiety is linked to residue G2. The PTAP/PSAP motif signature appears at 109 to 112 (PTAP). The short motif at 128–132 (LYPAL) is the LYPX(n)L motif element. Disordered stretches follow at residues 139 to 218 (KPPK…LRMG), 449 to 497 (KEER…RPQL), and 511 to 549 (WAKDCPKKPRGPRGPRPQTSLLTLGDXGGQGQEPPPEPR). The PPXY motif signature appears at 161–164 (PPPY). A Phosphoserine; by host modification is found at S190. Residues 436 to 476 (EEREERIRREIEEKEERRRAEDEQRERERDRRRHREMSKLL) adopt a coiled-coil conformation. Composition is skewed to basic and acidic residues over residues 449-464 (KEERRRAEDEQRERER) and 484-497 (RQDRQGGERRRPQL). The CCHC-type zinc-finger motif lies at 500-517 (DQCAYCKEKGHWAKDCPK). The segment covering 526 to 535 (RPQTSLLTLG) has biased composition (low complexity). The region spanning 559–629 (VTFLVDTGAQ…CPYPLLGRDL (71 aa)) is the Peptidase A2 domain. D564 (protease; shared with dimeric partner) is an active-site residue. Residues Y721, D771, R773, and P787 each contribute to the RNA site. Residues 739–930 (LDQGILVPCQ…KQVKYLGYLL (192 aa)) form the Reverse transcriptase domain. D807 serves as a coordination point for Mg(2+). 2 residues coordinate RNA: N851 and P853. Mg(2+) is bound by residues D881 and D882. 4 residues coordinate DNA: R941, R955, R958, and F966. The RNA site is built by K1054 and K1055. W1063 serves as a coordination point for DNA. K1082 provides a ligand contact to RNA. R1113 lines the DNA pocket. Residues 1172 to 1318 (PDADYTWYTD…ADQAAREAAM (147 aa)) form the RNase H type-1 domain. Mg(2+) is bound at residue D1181. 2 residues coordinate RNA: S1184 and L1186. DNA is bound by residues Q1187, S1214, and Q1216. The Mg(2+) site is built by E1219 and D1240. 2 residues coordinate RNA: R1242 and R1266. 3 residues coordinate Mg(2+): D1310, D1453, and D1512. An Integrase catalytic domain is found at 1442–1600 (RGHRPGTHWE…TPYEILYGAP (159 aa)).

As to quaternary structure, homohexamer, that further associates as homomultimer. The virus core is composed of a lattice formed from hexagonal rings, each containing six capsid monomers. The protease is a homodimer, whose active site consists of two apposed aspartic acid residues. The reverse transcriptase is a monomer. In terms of assembly, interacts (via PPXY motif) with host NEDD4. Interacts (via PSAP motif) with host TSG101. Interacts (via LYPX(n)L motif) with host PDCD6IP. The reverse transcriptase is a monomer (Potential). Interacts (via RNase domains) with host release factor ETF1; this interaction is essential for translational readthrough of amber codon between viral gag and pol genes, as well as for viral replication. As to quaternary structure, homodimer. The cofactor is Mg(2+). Requires Mn(2+) as cofactor. Post-translationally, specific enzymatic cleavages by the viral protease yield mature proteins. The protease is released by autocatalytic cleavage. The polyprotein is cleaved during and after budding, this process is termed maturation. Sumoylated; which is required for virus replication. In terms of processing, phosphorylated on serine residues.

It localises to the host cell membrane. Its subcellular location is the virion. It catalyses the reaction DNA(n) + a 2'-deoxyribonucleoside 5'-triphosphate = DNA(n+1) + diphosphate. The catalysed reaction is Endonucleolytic cleavage to 5'-phosphomonoester.. Plays a role in budding and is processed by the viral protease during virion maturation outside the cell. During budding, it recruits, in a PPXY-dependent or independent manner, Nedd4-like ubiquitin ligases that conjugate ubiquitin molecules to Gag, or to Gag binding host factors. Interaction with HECT ubiquitin ligases probably link the viral protein to the host ESCRT pathway and facilitate release. In terms of biological role, targets Gag and gag-pol polyproteins to the plasma membrane via a multipartite membrane binding signal, that includes its myristoylated N-terminus. Also mediates nuclear localization of the pre-integration complex. Functionally, forms the spherical core of the virion that encapsulates the genomic RNA-nucleocapsid complex. Its function is as follows. Involved in the packaging and encapsidation of two copies of the genome. Binds with high affinity to conserved UCUG elements within the packaging signal, located near the 5'-end of the genome. This binding is dependent on genome dimerization. Acts as a nucleic acid chaperone which is involved in rearrangement of nucleic acid secondary structures during gRNA retrotranscription. The aspartyl protease mediates proteolytic cleavages of Gag and Gag-Pol polyproteins during or shortly after the release of the virion from the plasma membrane. Cleavages take place as an ordered, step-wise cascade to yield mature proteins. This process is called maturation. Displays maximal activity during the budding process just prior to particle release from the cell. In terms of biological role, RT is a multifunctional enzyme that converts the viral dimeric RNA genome into dsDNA in the cytoplasm, shortly after virus entry into the cell. This enzyme displays a DNA polymerase activity that can copy either DNA or RNA templates, and a ribonuclease H (RNase H) activity that cleaves the RNA strand of RNA-DNA heteroduplexes in a partially processive 3' to 5' endonucleasic mode. Conversion of viral genomic RNA into dsDNA requires many steps. A tRNA binds to the primer-binding site (PBS) situated at the 5' end of the viral RNA. RT uses the 3' end of the tRNA primer to perform a short round of RNA-dependent minus-strand DNA synthesis. The reading proceeds through the U5 region and ends after the repeated (R) region which is present at both ends of viral RNA. The portion of the RNA-DNA heteroduplex is digested by the RNase H, resulting in a ssDNA product attached to the tRNA primer. This ssDNA/tRNA hybridizes with the identical R region situated at the 3' end of viral RNA. This template exchange, known as minus-strand DNA strong stop transfer, can be either intra- or intermolecular. RT uses the 3' end of this newly synthesized short ssDNA to perform the RNA-dependent minus-strand DNA synthesis of the whole template. RNase H digests the RNA template except for a polypurine tract (PPT) situated at the 5' end of the genome. It is not clear if both polymerase and RNase H activities are simultaneous. RNase H probably can proceed both in a polymerase-dependent (RNA cut into small fragments by the same RT performing DNA synthesis) and a polymerase-independent mode (cleavage of remaining RNA fragments by free RTs). Secondly, RT performs DNA-directed plus-strand DNA synthesis using the PPT that has not been removed by RNase H as primers. PPT and tRNA primers are then removed by RNase H. The 3' and 5' ssDNA PBS regions hybridize to form a circular dsDNA intermediate. Strand displacement synthesis by RT to the PBS and PPT ends produces a blunt ended, linear dsDNA copy of the viral genome that includes long terminal repeats (LTRs) at both ends. Functionally, catalyzes viral DNA integration into the host chromosome, by performing a series of DNA cutting and joining reactions. This enzyme activity takes place after virion entry into a cell and reverse transcription of the RNA genome in dsDNA. The first step in the integration process is 3' processing. This step requires a complex comprising the viral genome, matrix protein and integrase. This complex is called the pre-integration complex (PIC). The integrase protein removes 2 nucleotides from each 3' end of the viral DNA, leaving recessed CA OH's at the 3' ends. In the second step that requires cell division, the PIC enters cell nucleus. In the third step, termed strand transfer, the integrase protein joins the previously processed 3' ends to the 5' ends of strands of target cellular DNA at the site of integration. The last step is viral DNA integration into host chromosome. In Homo sapiens (Human), this protein is Gag-Pol polyprotein (gag-pol).